The following is a 325-amino-acid chain: Tetraacyldisaccharide 4'-kinase (325 aa).

54–61 (SVGGTGKT) serves as a coordination point for ATP.

It belongs to the LpxK family.

The enzyme catalyses a lipid A disaccharide + ATP = a lipid IVA + ADP + H(+). It functions in the pathway glycolipid biosynthesis; lipid IV(A) biosynthesis; lipid IV(A) from (3R)-3-hydroxytetradecanoyl-[acyl-carrier-protein] and UDP-N-acetyl-alpha-D-glucosamine: step 6/6. In terms of biological role, transfers the gamma-phosphate of ATP to the 4'-position of a tetraacyldisaccharide 1-phosphate intermediate (termed DS-1-P) to form tetraacyldisaccharide 1,4'-bis-phosphate (lipid IVA). This is Tetraacyldisaccharide 4'-kinase from Rickettsia akari (strain Hartford).